A 151-amino-acid polypeptide reads, in one-letter code: Centrin-A (151 aa).

2 consecutive EF-hand domains span residues 80–115 (DVYA…LGEA) and 116–151 (RSDS…KKIY). Residues aspartate 93, aspartate 95, serine 97, tyrosine 99, aspartate 104, aspartate 129, asparagine 131, aspartate 133, lysine 135, and glutamate 140 each coordinate Ca(2+).

This sequence belongs to the centrin family.

It localises to the cytoplasm. Its subcellular location is the cytoskeleton. The protein resides in the microtubule organizing center. It is found in the centrosome. The protein localises to the nucleus. Plays a fundamental role in microtubule-organizing center structure and function. In Dictyostelium discoideum (Social amoeba), this protein is Centrin-A (cenA).